A 371-amino-acid chain; its full sequence is Neuropeptide Y receptor type 6 (371 aa).

Over Met-1–Pro-31 the chain is Extracellular. N-linked (GlcNAc...) asparagine glycans are attached at residues Asn-11 and Asn-18. The chain crosses the membrane as a helical span at residues Ser-32–Gly-52. Residues Asn-53 to Asn-72 are Cytoplasmic-facing. A helical transmembrane segment spans residues Ile-73–Thr-93. Over Ala-94–Leu-111 the chain is Extracellular. Cys-109 and Cys-196 are oxidised to a cystine. A helical transmembrane segment spans residues Thr-112–Ile-132. Topologically, residues Glu-133 to His-150 are cytoplasmic. A helical transmembrane segment spans residues Ala-151 to Leu-171. Residues Ser-172 to Leu-213 are Extracellular-facing. An N-linked (GlcNAc...) asparagine glycan is attached at Asn-182. Residues Ile-214–Ile-234 traverse the membrane as a helical segment. The Cytoplasmic segment spans residues Cys-235 to Leu-263. The chain crosses the membrane as a helical span at residues Ile-264–Phe-284. Over Asp-285–Asp-297 the chain is Extracellular. Residues Leu-298–Tyr-318 traverse the membrane as a helical segment. The Cytoplasmic portion of the chain corresponds to Gly-319–Ile-371. A lipid anchor (S-palmitoyl cysteine) is attached at Cys-336.

It belongs to the G-protein coupled receptor 1 family. Expressed in hippocampus, striatum, hypothalamus, cerebellum, small intestine, colon and adrenal gland.

The protein localises to the cell membrane. Functionally, receptor for neuropeptide Y and peptide YY. The activity of this receptor is mediated by G proteins that inhibit adenylate cyclase activity. In Oryctolagus cuniculus (Rabbit), this protein is Neuropeptide Y receptor type 6 (NPY6R).